The sequence spans 629 residues: tRNA uridine 5-carboxymethylaminomethyl modification enzyme MnmG (629 aa).

Residues 13–18 (GGGHAG), Val125, and Ser180 each bind FAD. 273-287 (GPRYCPSIEDKVMRF) is a binding site for NAD(+). Residue Gln370 participates in FAD binding.

The protein belongs to the MnmG family. As to quaternary structure, homodimer. Heterotetramer of two MnmE and two MnmG subunits. It depends on FAD as a cofactor.

The protein resides in the cytoplasm. Its function is as follows. NAD-binding protein involved in the addition of a carboxymethylaminomethyl (cmnm) group at the wobble position (U34) of certain tRNAs, forming tRNA-cmnm(5)s(2)U34. The sequence is that of tRNA uridine 5-carboxymethylaminomethyl modification enzyme MnmG from Salmonella typhi.